An 85-amino-acid polypeptide reads, in one-letter code: Phosphocarrier protein HPr (85 aa).

One can recognise an HPr domain in the interval 1-85; it reads MFQKEIKINA…HLSKIMTELE (85 aa). Catalysis depends on H15, which acts as the Pros-phosphohistidine intermediate.

It belongs to the HPr family.

Its subcellular location is the cytoplasm. Functionally, general (non sugar-specific) component of the phosphoenolpyruvate-dependent sugar phosphotransferase system (sugar PTS). This major carbohydrate active-transport system catalyzes the phosphorylation of incoming sugar substrates concomitantly with their translocation across the cell membrane. The phosphoryl group from phosphoenolpyruvate (PEP) is transferred to the phosphoryl carrier protein HPr by enzyme I. Phospho-HPr then transfers it to the PTS EIIA domain. The sequence is that of Phosphocarrier protein HPr (ptsH) from Buchnera aphidicola subsp. Schizaphis graminum (strain Sg).